Consider the following 355-residue polypeptide: 6-aminohexanoate-oligomer endohydrolase (355 aa).

Threonine 267 functions as the Nucleophile in the catalytic mechanism.

It belongs to the peptidase S58 family. As to quaternary structure, heterotetramer composed of 4 alpha/beta heterodimers. Expressed as an inactive precursor that is cleaved autocatalytically at Asn266/Thr267 to generate an active enzyme composed of an alpha subunit and a beta subunit.

It carries out the reaction [N-(6-aminohexanoyl)]n + H2O = [N-(6-aminohexanoyl)]n-x + [N-(6-aminohexanoyl)]x.. Its pathway is xenobiotic degradation; nylon-6 oligomer degradation. In terms of biological role, involved in the degradation of nylon-6 oligomers. Degrades cyclic and linear oligomers of 6-aminohexanoate (Ahx) with a degree of polymerization greater than three by an endo-type mode. Cannot use Ahx cyclic dimer or the Ahx linear dimer. This Agromyces sp. (strain KY5R) protein is 6-aminohexanoate-oligomer endohydrolase.